Consider the following 507-residue polypeptide: MLNADLKQQLKQLLELMEGNVEFVASLGSDDKSKELKDLLTEITDMSPRLSLSEKSLKRTPSFSVNRPGEETGVTFAGIPLGHEFNSLVLAILQVSGRAPKEKQSIIDQIKKLEGSFHFETFISLTCQKCPDVVQALNLMSVINPNITHSMIDGAVFREESENIMAVPAVFLNGEEFGNGRMTIQDILSKLGSTADASEFENKEPYDVLIVGGGPASGSAAIYTARKGLRTGIVADRIGGQVNDTAGIENFITVKETTGSEFSSNLAAHIDQYDIDAMTGIRATDIEKTDEAIKVTLENGAVLESKTVIIATGAGWRKLNIPGEEQLINKGVAFCPHCDGPLFENKDVAVIGGGNSGVEAAIDLAGIVNHVTLFEFASELKADNVLQDRLRSLSNVDIKTNAKTTEVVGEDHVTGIRYEDMNTGEEHLLNLDGIFVQIGLLPNTSWLNDAVELNERGEIVIDRNNNTNVPGIFAAGDVTDQKNKQIIISMGAGANAALNAFDYIIRN.

207 to 222 (DVLIVGGGPASGSAAI) provides a ligand contact to FAD. A disulfide bridge links Cys-335 with Cys-338. 347-361 (DVAVIGGGNSGVEAA) contributes to the NAD(+) binding site. 467-477 (TNVPGIFAAGD) provides a ligand contact to FAD.

Belongs to the class-II pyridine nucleotide-disulfide oxidoreductase family. As to quaternary structure, homodimer. It depends on FAD as a cofactor.

Functionally, serves to protect the cell against DNA damage by alkyl hydroperoxides. It can use either NADH or NADPH as electron donor for direct reduction of redox dyes or of alkyl hydroperoxides when combined with the AhpC protein. The chain is Alkyl hydroperoxide reductase subunit F (ahpF) from Staphylococcus aureus (strain NCTC 8325 / PS 47).